We begin with the raw amino-acid sequence, 166 residues long: Small ribosomal subunit protein uS5 (166 aa).

Positions 11–74 constitute an S5 DRBM domain; that stretch reads LQEKLIAVNR…EKARRNMINV (64 aa).

It belongs to the universal ribosomal protein uS5 family. As to quaternary structure, part of the 30S ribosomal subunit. Contacts proteins S4 and S8.

Its function is as follows. With S4 and S12 plays an important role in translational accuracy. In terms of biological role, located at the back of the 30S subunit body where it stabilizes the conformation of the head with respect to the body. The chain is Small ribosomal subunit protein uS5 from Cronobacter sakazakii (strain ATCC BAA-894) (Enterobacter sakazakii).